Reading from the N-terminus, the 296-residue chain is Nitrogenase iron protein 2 (296 aa).

11 to 18 (GKGGIGKS) is an ATP binding site. Residue Cys-99 coordinates [4Fe-4S] cluster. An ADP-ribosylarginine; by dinitrogenase reductase ADP-ribosyltransferase modification is found at Arg-102. Cys-133 contacts [4Fe-4S] cluster.

It belongs to the NifH/BchL/ChlL family. Homodimer. The cofactor is [4Fe-4S] cluster. Post-translationally, the reversible ADP-ribosylation of Arg-102 inactivates the nitrogenase reductase and regulates nitrogenase activity.

The enzyme catalyses N2 + 8 reduced [2Fe-2S]-[ferredoxin] + 16 ATP + 16 H2O = H2 + 8 oxidized [2Fe-2S]-[ferredoxin] + 2 NH4(+) + 16 ADP + 16 phosphate + 6 H(+). Functionally, the key enzymatic reactions in nitrogen fixation are catalyzed by the nitrogenase complex, which has 2 components: the iron protein and the molybdenum-iron protein. The protein is Nitrogenase iron protein 2 (nifH2) of Azorhizobium caulinodans (strain ATCC 43989 / DSM 5975 / JCM 20966 / LMG 6465 / NBRC 14845 / NCIMB 13405 / ORS 571).